The primary structure comprises 75 residues: Caerin 1.11 (75 aa).

The signal sequence occupies residues 1–22; the sequence is MASLKKSLFLVLFLGFVSVSIC. A propeptide spanning residues 23 to 49 is cleaved from the precursor; sequence EEEKRQEDEDEHEEEGENQEEGSEEKR. The segment at 24–48 is disordered; that stretch reads EEKRQEDEDEHEEEGENQEEGSEEK. Residues 30–45 are compositionally biased toward acidic residues; it reads DEDEHEEEGENQEEGS. The residue at position 74 (leucine 74) is a Leucine amide.

The protein belongs to the frog skin active peptide (FSAP) family. Caerin subfamily. Expressed by the skin glands.

The protein resides in the secreted. It localises to the target cell membrane. Its function is as follows. Cationic amphipathic alpha-helical antimicrobial peptide with weak or no activity against both Gram-positive and Gram-negative bacteria. Is weakly active against E.coli (MIC=25 uM), E.cloacae (MIC=50 uM), K.pneumoniae (MIC=25 uM), and S.haemolyticus (MIC=50 uM). Has no activity against S.typhimurium, S.enteritidis, B.megaterium, and S.aureus (MIC&gt;100 uM). This Ranoidea caerulea (Green tree frog) protein is Caerin 1.11.